A 302-amino-acid chain; its full sequence is Methionyl-tRNA formyltransferase (302 aa).

108 to 111 is a (6S)-5,6,7,8-tetrahydrofolate binding site; sequence SLLP. A compositionally biased stretch (basic and acidic residues) spans 276–288; it reads REGKRPMEPEEFL. Residues 276-302 form a disordered region; the sequence is REGKRPMEPEEFLRGFPLPEGSRAHTA.

This sequence belongs to the Fmt family.

It carries out the reaction L-methionyl-tRNA(fMet) + (6R)-10-formyltetrahydrofolate = N-formyl-L-methionyl-tRNA(fMet) + (6S)-5,6,7,8-tetrahydrofolate + H(+). Functionally, attaches a formyl group to the free amino group of methionyl-tRNA(fMet). The formyl group appears to play a dual role in the initiator identity of N-formylmethionyl-tRNA by promoting its recognition by IF2 and preventing the misappropriation of this tRNA by the elongation apparatus. This chain is Methionyl-tRNA formyltransferase, found in Cereibacter sphaeroides (strain KD131 / KCTC 12085) (Rhodobacter sphaeroides).